The sequence spans 334 residues: Probable fructose-bisphosphate aldolase class 1 (334 aa).

Belongs to the class I fructose-bisphosphate aldolase family.

It catalyses the reaction beta-D-fructose 1,6-bisphosphate = D-glyceraldehyde 3-phosphate + dihydroxyacetone phosphate. It functions in the pathway carbohydrate degradation; glycolysis; D-glyceraldehyde 3-phosphate and glycerone phosphate from D-glucose: step 4/4. The sequence is that of Probable fructose-bisphosphate aldolase class 1 from Xanthomonas axonopodis pv. citri (strain 306).